A 668-amino-acid chain; its full sequence is DNA ligase (668 aa).

NAD(+) is bound by residues 34–38 (DAEYD), 83–84 (SL), and glutamate 117. Catalysis depends on lysine 119, which acts as the N6-AMP-lysine intermediate. The NAD(+) site is built by arginine 140, glutamate 177, lysine 293, and lysine 317. The Zn(2+) site is built by cysteine 411, cysteine 414, cysteine 429, and cysteine 434. The 78-residue stretch at 591–668 (RVGGRFTGKT…SEDDFLELMQ (78 aa)) folds into the BRCT domain.

It belongs to the NAD-dependent DNA ligase family. LigA subfamily. Requires Mg(2+) as cofactor. Mn(2+) serves as cofactor.

The enzyme catalyses NAD(+) + (deoxyribonucleotide)n-3'-hydroxyl + 5'-phospho-(deoxyribonucleotide)m = (deoxyribonucleotide)n+m + AMP + beta-nicotinamide D-nucleotide.. Its function is as follows. DNA ligase that catalyzes the formation of phosphodiester linkages between 5'-phosphoryl and 3'-hydroxyl groups in double-stranded DNA using NAD as a coenzyme and as the energy source for the reaction. It is essential for DNA replication and repair of damaged DNA. This chain is DNA ligase, found in Citrifermentans bemidjiense (strain ATCC BAA-1014 / DSM 16622 / JCM 12645 / Bem) (Geobacter bemidjiensis).